The sequence spans 410 residues: E3 ubiquitin-protein ligase ICP0 (410 aa).

Residues 46–85 (CPICLDVAATEAQTLPCMHKFCLDCIQRWTLTSTACPLCN) form an RING-type zinc finger. The interval 243–410 (TSESEAHSDS…IFIDLTQDDD (168 aa)) is disordered. Residues 287–315 (APRRSPRRARRAAVLRREQRRTRCLRRGR) show a composition bias toward basic residues. Composition is skewed to low complexity over residues 329–340 (SSGEGSSAQHGA) and 348–399 (GSAN…PRSA).

Post-translationally, auto-ubiquitinated.

It carries out the reaction S-ubiquitinyl-[E2 ubiquitin-conjugating enzyme]-L-cysteine + [acceptor protein]-L-lysine = [E2 ubiquitin-conjugating enzyme]-L-cysteine + N(6)-ubiquitinyl-[acceptor protein]-L-lysine.. Evades nuclear antiviral defenses triggered by dsDNA viruses. Acts during the initial stages of lytic infection and the reactivation of latent viral genome. Prevents the antiviral effect of nuclear bodies by degrading host PML and SP100. This chain is E3 ubiquitin-protein ligase ICP0 (EP0), found in Sus scrofa (Pig).